Here is a 370-residue protein sequence, read N- to C-terminus: Cysteine-type anaerobic sulfatase-maturating enzyme (370 aa).

The Radical SAM core domain occupies 1 to 227 (MPPLSLLIKP…LKNLFDLWYE (227 aa)). Residues C15 and C19 each contribute to the [4Fe-4S] cluster site. Residue Y21 coordinates S-adenosyl-L-methionine. C22 contributes to the [4Fe-4S] cluster binding site. S-adenosyl-L-methionine contacts are provided by G66, S122, R134, and L195. The [4Fe-4S] cluster site is built by C255, C261, and C276. D277 functions as the Proton acceptor in the catalytic mechanism. 5 residues coordinate [4Fe-4S] cluster: C317, C320, C326, C330, and C348.

It belongs to the radical SAM superfamily. Anaerobic sulfatase-maturating enzyme family. [4Fe-4S] cluster serves as cofactor.

The enzyme catalyses L-cysteinyl-[sulfatase] + S-adenosyl-L-methionine + H2O = 3-oxo-L-alanyl-[sulfatase] + hydrogen sulfide + 5'-deoxyadenosine + L-methionine + 2 H(+). Its pathway is protein modification; sulfatase oxidation. Functionally, involved in 'Cys-type' sulfatase maturation under anaerobic conditions. Catalyzes the post-translational modification of cysteine into 3-oxoalanine (also known as C(alpha)-formylglycine (FGly)), by a free radical chemical mechanism initiated via the reductive cleavage of S-adenosyl-L-methionine (SAM). This Clostridium perfringens (strain 13 / Type A) protein is Cysteine-type anaerobic sulfatase-maturating enzyme.